The following is a 308-amino-acid chain: Probable pyridoxal 5'-phosphate synthase subunit pdx-1 (308 aa).

D30 is a binding site for D-ribose 5-phosphate. K87 (schiff-base intermediate with D-ribose 5-phosphate) is an active-site residue. G159 provides a ligand contact to D-ribose 5-phosphate. Residue R171 participates in D-glyceraldehyde 3-phosphate binding. Residues G224 and 245-246 (GS) contribute to the D-ribose 5-phosphate site.

The protein belongs to the PdxS/SNZ family.

It carries out the reaction aldehydo-D-ribose 5-phosphate + D-glyceraldehyde 3-phosphate + L-glutamine = pyridoxal 5'-phosphate + L-glutamate + phosphate + 3 H2O + H(+). It functions in the pathway cofactor biosynthesis; pyridoxal 5'-phosphate biosynthesis. Its function is as follows. Catalyzes the formation of pyridoxal 5'-phosphate from ribose 5-phosphate (RBP), glyceraldehyde 3-phosphate (G3P) and ammonia. The ammonia is provided by pdx-2. Can also use ribulose 5-phosphate and dihydroxyacetone phosphate as substrates, resulting from enzyme-catalyzed isomerization of RBP and G3P, respectively. Also plays an indirect role in resistance to singlet oxygen-generating photosensitizers. The protein is Probable pyridoxal 5'-phosphate synthase subunit pdx-1 (pdx-1) of Neurospora crassa (strain ATCC 24698 / 74-OR23-1A / CBS 708.71 / DSM 1257 / FGSC 987).